The following is a 193-amino-acid chain: Protein THEM6 (193 aa).

The N-terminal stretch at 1–18 is a signal peptide; it reads MSWLVVLLILYVIWDVNY. The N-linked (GlcNAc...) asparagine glycan is linked to N149.

It belongs to the THEM6 family.

Its subcellular location is the secreted. This chain is Protein THEM6, found in Drosophila melanogaster (Fruit fly).